Reading from the N-terminus, the 570-residue chain is MAGGAREVLTLQLGHFAGFVGAHWWNQQDAALGRATDSKEPPGELCPDVLYRTGRTLHGQETYTPRLILMDLKGSLSSLKEEGGLYRDKQLDAAIAWQGKLTTHKEELYPKNPYLQDFLSAEGVLSSDGVWRVKSIPNGKGSSPLPTATTPKPLIPTEASIRVWSDFLRVHLHPRSICMIQKYNHDGEAGRLEAFGQGESVLKEPKYQEELEDRLHFYVEECDYLQGFQILCDLHDGFSGVGAKAAELLQDEYSGRGIITWGLLPGPYHRGEAQRNIYRLLNTAFGLVHLTAHSSLVCPLSLGGSLGLRPEPPVSFPYLHYDATLPFHCSAILATALDTVTVPYRLCSSPVSMVHLADMLSFCGKKVVTAGAIIPFPLAPGQSLPDSLMQFGGATPWTPLSACGEPSGTRCFAQSVVLRGIDRACHTSQLTPGTPPPSALHACTTGEEILAQYLQQQQPGVMSSSHLLLTPCRVAPPYPHLFSSCSPPGMVLDGSPKGAAVESIPVFGALCSSSSLHQTLEALARDLTKLDLRRWASFMDAGVEHDDVAELLQELQSLAQCYQGGDSLVD.

Phosphoserine is present on S495.

It belongs to the misato family. In terms of tissue distribution, present in all cell lines tested (at protein level). Widely expressed.

Its subcellular location is the mitochondrion outer membrane. It localises to the cytoplasm. In terms of biological role, involved in the regulation of mitochondrial distribution and morphology. Required for mitochondrial fusion and mitochondrial network formation. The protein is Protein misato homolog 1 (MSTO1) of Homo sapiens (Human).